A 466-amino-acid chain; its full sequence is Glutamate--tRNA ligase (466 aa).

Positions 10–20 match the 'HIGH' region motif; sequence PSPTGALHIGG. Zn(2+)-binding residues include Cys99, Cys101, Cys126, and Asp128. Residues 239–243 carry the 'KMSKS' region motif; it reads KLSKR. Position 242 (Lys242) interacts with ATP.

This sequence belongs to the class-I aminoacyl-tRNA synthetase family. Glutamate--tRNA ligase type 1 subfamily. As to quaternary structure, monomer. Zn(2+) serves as cofactor.

The protein localises to the cytoplasm. The catalysed reaction is tRNA(Glu) + L-glutamate + ATP = L-glutamyl-tRNA(Glu) + AMP + diphosphate. Functionally, catalyzes the attachment of glutamate to tRNA(Glu) in a two-step reaction: glutamate is first activated by ATP to form Glu-AMP and then transferred to the acceptor end of tRNA(Glu). The sequence is that of Glutamate--tRNA ligase from Pelagibacter ubique (strain HTCC1062).